We begin with the raw amino-acid sequence, 156 residues long: Toxin Res (156 aa).

It belongs to the MbcT/ParT/Res family. Homodimer. Forms a complex with cognate antitoxin Xre.

Functionally, toxic component of a type II toxin-antitoxin (TA) system. Expression in E.coli inhibits cell growth; bacteriostasis is neutralized by expression of cognate antitoxin Xre. Expression in E.coli leads to almost complete depletion of intracellular NAD(+): NAD(+) levels are partially restored when coexpressed with antitoxin Xre. This Photorhabdus laumondii subsp. laumondii (strain DSM 15139 / CIP 105565 / TT01) (Photorhabdus luminescens subsp. laumondii) protein is Toxin Res.